We begin with the raw amino-acid sequence, 451 residues long: Bifunctional protein GlmU (451 aa).

Residues 1–232 are pyrophosphorylase; the sequence is MTARSSLTIV…EDEVRGINTK (232 aa). Residues 11–14, K25, Q78, and 83–84 each bind UDP-N-acetyl-alpha-D-glucosamine; these read LAAG and GT. D108 serves as a coordination point for Mg(2+). The UDP-N-acetyl-alpha-D-glucosamine site is built by G144, E158, N173, and N230. Mg(2+) is bound at residue N230. The segment at 233 to 253 is linker; sequence AQLAEAESVMQARLRKAAMEA. An N-acetyltransferase region spans residues 254–451; sequence GVTLIAPETV…MKTRGKKPEK (198 aa). The UDP-N-acetyl-alpha-D-glucosamine site is built by R319 and K337. Residue H349 is the Proton acceptor of the active site. 2 residues coordinate UDP-N-acetyl-alpha-D-glucosamine: Y352 and N363. Acetyl-CoA is bound by residues A366, 372–373, S409, and R426; that span reads NY.

This sequence in the N-terminal section; belongs to the N-acetylglucosamine-1-phosphate uridyltransferase family. In the C-terminal section; belongs to the transferase hexapeptide repeat family. In terms of assembly, homotrimer. Mg(2+) serves as cofactor.

The protein localises to the cytoplasm. The catalysed reaction is alpha-D-glucosamine 1-phosphate + acetyl-CoA = N-acetyl-alpha-D-glucosamine 1-phosphate + CoA + H(+). It catalyses the reaction N-acetyl-alpha-D-glucosamine 1-phosphate + UTP + H(+) = UDP-N-acetyl-alpha-D-glucosamine + diphosphate. Its pathway is nucleotide-sugar biosynthesis; UDP-N-acetyl-alpha-D-glucosamine biosynthesis; N-acetyl-alpha-D-glucosamine 1-phosphate from alpha-D-glucosamine 6-phosphate (route II): step 2/2. The protein operates within nucleotide-sugar biosynthesis; UDP-N-acetyl-alpha-D-glucosamine biosynthesis; UDP-N-acetyl-alpha-D-glucosamine from N-acetyl-alpha-D-glucosamine 1-phosphate: step 1/1. It functions in the pathway bacterial outer membrane biogenesis; LPS lipid A biosynthesis. Its function is as follows. Catalyzes the last two sequential reactions in the de novo biosynthetic pathway for UDP-N-acetylglucosamine (UDP-GlcNAc). The C-terminal domain catalyzes the transfer of acetyl group from acetyl coenzyme A to glucosamine-1-phosphate (GlcN-1-P) to produce N-acetylglucosamine-1-phosphate (GlcNAc-1-P), which is converted into UDP-GlcNAc by the transfer of uridine 5-monophosphate (from uridine 5-triphosphate), a reaction catalyzed by the N-terminal domain. The sequence is that of Bifunctional protein GlmU from Bradyrhizobium diazoefficiens (strain JCM 10833 / BCRC 13528 / IAM 13628 / NBRC 14792 / USDA 110).